A 283-amino-acid polypeptide reads, in one-letter code: 4-diphosphocytidyl-2-C-methyl-D-erythritol kinase (283 aa).

The active site involves K10. P99 to S109 is an ATP binding site. D141 is a catalytic residue.

It belongs to the GHMP kinase family. IspE subfamily. As to quaternary structure, homodimer.

It catalyses the reaction 4-CDP-2-C-methyl-D-erythritol + ATP = 4-CDP-2-C-methyl-D-erythritol 2-phosphate + ADP + H(+). Its pathway is isoprenoid biosynthesis; isopentenyl diphosphate biosynthesis via DXP pathway; isopentenyl diphosphate from 1-deoxy-D-xylulose 5-phosphate: step 3/6. Functionally, catalyzes the phosphorylation of the position 2 hydroxy group of 4-diphosphocytidyl-2C-methyl-D-erythritol. The chain is 4-diphosphocytidyl-2-C-methyl-D-erythritol kinase from Salmonella gallinarum (strain 287/91 / NCTC 13346).